The sequence spans 671 residues: DNA ligase (671 aa).

Residues 32–36 (DAEYD), 81–82 (SL), and Glu113 each bind NAD(+). The N6-AMP-lysine intermediate role is filled by Lys115. Residues Arg136, Glu173, Lys290, and Lys314 each contribute to the NAD(+) site. Residues Cys408, Cys411, Cys426, and Cys432 each coordinate Zn(2+). The region spanning 593 to 671 (EIDSPFAGKT…ETEMLRLLGS (79 aa)) is the BRCT domain.

It belongs to the NAD-dependent DNA ligase family. LigA subfamily. Requires Mg(2+) as cofactor. Mn(2+) serves as cofactor.

It catalyses the reaction NAD(+) + (deoxyribonucleotide)n-3'-hydroxyl + 5'-phospho-(deoxyribonucleotide)m = (deoxyribonucleotide)n+m + AMP + beta-nicotinamide D-nucleotide.. Functionally, DNA ligase that catalyzes the formation of phosphodiester linkages between 5'-phosphoryl and 3'-hydroxyl groups in double-stranded DNA using NAD as a coenzyme and as the energy source for the reaction. It is essential for DNA replication and repair of damaged DNA. This Escherichia fergusonii (strain ATCC 35469 / DSM 13698 / CCUG 18766 / IAM 14443 / JCM 21226 / LMG 7866 / NBRC 102419 / NCTC 12128 / CDC 0568-73) protein is DNA ligase.